Here is a 201-residue protein sequence, read N- to C-terminus: Envelope glycoprotein (201 aa).

The Extracellular portion of the chain corresponds to 1-148; sequence RRARYKKEPV…FNKSPWFTTL (148 aa). A fusion peptide region spans residues 10–30; the sequence is VSLTLALLLGGLTMGGIAAGV. A coiled-coil region spans residues 39-75; that stretch reads ATQQFQQLQAAIHDDLKEVEKSITNLEKSLTSLSEVV. An immunosuppression region spans residues 76 to 92; it reads LQNRRGLDLLFLKEGGL. Residues 93 to 101 carry the CX6CC motif; sequence CAALKEECC. The chain crosses the membrane as a helical span at residues 149–169; sequence ISTVMGPLIILLLILLFGPCI. A lipid anchor (S-palmitoyl cysteine; by host) is attached at C168. At 170–201 the chain is on the cytoplasmic side; sequence LNRLVQFIKDRISVVQALVLTQQYHQLKTIGD. The YXXL motif; contains endocytosis signal signature appears at 193–196; that stretch reads YHQL.

As to quaternary structure, the mature envelope protein (Env) consists of a trimer of SU-TM heterodimers attached by a labile interchain disulfide bond. Specific enzymatic cleavages in vivo yield mature proteins. Envelope glycoproteins are synthesized as an inactive precursor that is N-glycosylated and processed likely by host cell furin or by a furin-like protease in the Golgi to yield the mature SU and TM proteins. The cleavage site between SU and TM requires the minimal sequence [KR]-X-[KR]-R. The R-peptide is released from the C-terminus of the cytoplasmic tail of the TM protein upon particle formation as a result of proteolytic cleavage by the viral protease. Cleavage of this peptide is required for TM to become fusogenic. In terms of processing, the transmembrane protein is palmitoylated. Post-translationally, the R-peptide is palmitoylated.

The protein resides in the virion membrane. It is found in the host cell membrane. In terms of biological role, the surface protein (SU) attaches the virus to the host cell by binding to its receptor. This interaction triggers the refolding of the transmembrane protein (TM) and is thought to activate its fusogenic potential by unmasking its fusion peptide. Fusion occurs at the host cell plasma membrane. Its function is as follows. The transmembrane protein (TM) acts as a class I viral fusion protein. Under the current model, the protein has at least 3 conformational states: pre-fusion native state, pre-hairpin intermediate state, and post-fusion hairpin state. During viral and target cell membrane fusion, the coiled coil regions (heptad repeats) assume a trimer-of-hairpins structure, positioning the fusion peptide in close proximity to the C-terminal region of the ectodomain. The formation of this structure appears to drive apposition and subsequent fusion of viral and target cell membranes. Membranes fusion leads to delivery of the nucleocapsid into the cytoplasm. The chain is Envelope glycoprotein (env) from Mus musculus (Mouse).